Consider the following 358-residue polypeptide: Phosphoserine aminotransferase (358 aa).

Residue Arg-41 participates in L-glutamate binding. Pyridoxal 5'-phosphate is bound by residues 75–76, Trp-100, Thr-148, Asp-167, and Gln-190; that span reads AS. An N6-(pyridoxal phosphate)lysine modification is found at Lys-191. 233–234 is a pyridoxal 5'-phosphate binding site; the sequence is NT.

This sequence belongs to the class-V pyridoxal-phosphate-dependent aminotransferase family. SerC subfamily. As to quaternary structure, homodimer. It depends on pyridoxal 5'-phosphate as a cofactor.

The protein resides in the cytoplasm. It catalyses the reaction O-phospho-L-serine + 2-oxoglutarate = 3-phosphooxypyruvate + L-glutamate. The catalysed reaction is 4-(phosphooxy)-L-threonine + 2-oxoglutarate = (R)-3-hydroxy-2-oxo-4-phosphooxybutanoate + L-glutamate. The protein operates within amino-acid biosynthesis; L-serine biosynthesis; L-serine from 3-phospho-D-glycerate: step 2/3. Its pathway is cofactor biosynthesis; pyridoxine 5'-phosphate biosynthesis; pyridoxine 5'-phosphate from D-erythrose 4-phosphate: step 3/5. Functionally, catalyzes the reversible conversion of 3-phosphohydroxypyruvate to phosphoserine and of 3-hydroxy-2-oxo-4-phosphonooxybutanoate to phosphohydroxythreonine. This is Phosphoserine aminotransferase from Campylobacter lari (strain RM2100 / D67 / ATCC BAA-1060).